A 204-amino-acid polypeptide reads, in one-letter code: Protein Nef (204 aa).

The interval 1–33 (MGGKWSKRRAEGWQTIRERMRRAEPAEPAADGV) is disordered. Glycine 2 carries the N-myristoyl glycine; by host lipid modification. Serine 6 carries the phosphoserine; by host modification. Residues 8 to 25 (RRAEGWQTIRERMRRAEP) show a composition bias toward basic and acidic residues. Residues 63–66 (EEGE) are acidic; interacts with host PACS1 and PACS2; stabilizes the interaction of NEF/MHC-I with host AP1M1; necessary for MHC-I internalization. The segment at 70–79 (PVRPQVPLRP) is SH3-binding; interaction with Src family tyrosine kinases. A PxxP; stabilizes the interaction of NEF/MHC-I with host AP1M1; necessary for MHC-I internalization motif is present at residues 73-76 (PQVP). Positions 109–125 (DILDLWVYHTQGFFPDW) are mediates dimerization, Nef-PTE1 interaction. The tract at residues 149 to 179 (VEPDEGENNREDNSLLHPANQHGVEDSERQV) is binding to ATP6V1H. Residues 163–164 (LL) carry the Dileucine internalization motif; necessary for CD4 internalization motif. A Diacidic; necessary for CD4 internalization motif is present at residues 173-174 (ED).

This sequence belongs to the lentivirus primate group Nef protein family. In terms of assembly, monomer; cytosolic form. Homodimer; membrane bound form. Interacts with Nef associated p21-activated kinase (PAK2); this interaction activates PAK2. Associates with the Nef-MHC-I-AP1 complex; this complex is required for MHC-I internalization. Interacts (via C-terminus) with host PI3-kinase. Interacts with host PACS1; this interaction seems to be weak. Interacts with host PACS2. Interacts with host LCK and MAPK3; these interactions inhibit the kinase activity of the latter. Interacts with host ATP6V1H; this interaction may play a role in CD4 endocytosis. Associates with the CD4-Nef-AP2 complex; this complex is required for CD4 internalization. Interacts with host AP2 subunit alpha and AP2 subunit sigma2. Interacts with TCR-zeta chain; this interaction up-regulates the Fas ligand (FasL) surface expression. Interacts with host HCK, LYN, and SRC; these interactions activate the Src family kinases. Interacts with MAP3K5; this interaction inhibits the Fas and TNFR-mediated death signals. Interacts with beta-COP and PTE1. Interacts with human RACK1; this increases Nef phosphorylation by PKC. Interacts with TP53; this interaction decreases the half-life of TP53, protecting the infected cell against p53-mediated apoptosis. The virion-associated Nef proteins are cleaved by the viral protease to release the soluble C-terminal core protein. Nef is probably cleaved concomitantly with viral structural proteins on maturation of virus particles. Post-translationally, myristoylated. In terms of processing, phosphorylated on serine residues, probably by host PKCdelta and theta.

The protein localises to the host cell membrane. It is found in the virion. The protein resides in the secreted. Its subcellular location is the host Golgi apparatus membrane. Its function is as follows. Factor of infectivity and pathogenicity, required for optimal virus replication. Alters numerous pathways of T-lymphocyte function and down-regulates immunity surface molecules in order to evade host defense and increase viral infectivity. Alters the functionality of other immunity cells, like dendritic cells, monocytes/macrophages and NK cells. In terms of biological role, in infected CD4(+) T-lymphocytes, down-regulates the surface MHC-I, mature MHC-II, CD4, CD28, CCR5 and CXCR4 molecules. Mediates internalization and degradation of host CD4 through the interaction of with the cytoplasmic tail of CD4, the recruitment of AP-2 (clathrin adapter protein complex 2), internalization through clathrin coated pits, and subsequent transport to endosomes and lysosomes for degradation. Diverts host MHC-I molecules to the trans-Golgi network-associated endosomal compartments by an endocytic pathway to finally target them for degradation. MHC-I down-regulation may involve AP-1 (clathrin adapter protein complex 1) or possibly Src family kinase-ZAP70/Syk-PI3K cascade recruited by PACS2. In consequence infected cells are masked for immune recognition by cytotoxic T-lymphocytes. Decreasing the number of immune receptors also prevents reinfection by more HIV particles (superinfection). Down-regulates host SERINC3 and SERINC5 thereby excluding these proteins from the viral particles. Virion infectivity is drastically higher when SERINC3 or SERINC5 are excluded from the viral envelope, because these host antiviral proteins impair the membrane fusion event necessary for subsequent virion penetration. Bypasses host T-cell signaling by inducing a transcriptional program nearly identical to that of anti-CD3 cell activation. Interaction with TCR-zeta chain up-regulates the Fas ligand (FasL). Increasing surface FasL molecules and decreasing surface MHC-I molecules on infected CD4(+) cells send attacking cytotoxic CD8+ T-lymphocytes into apoptosis. Functionally, plays a role in optimizing the host cell environment for viral replication without causing cell death by apoptosis. Protects the infected cells from apoptosis in order to keep them alive until the next virus generation is ready to strike. Inhibits the Fas and TNFR-mediated death signals by blocking MAP3K5/ASK1. Decreases the half-life of TP53, protecting the infected cell against p53-mediated apoptosis. Inhibits the apoptotic signals regulated by the Bcl-2 family proteins through the formation of a Nef/PI3-kinase/PAK2 complex that leads to activation of PAK2 and induces phosphorylation of host BAD. Its function is as follows. Extracellular Nef protein targets CD4(+) T-lymphocytes for apoptosis by interacting with CXCR4 surface receptors. This chain is Protein Nef, found in Human immunodeficiency virus type 1 group M subtype B (strain 89.6) (HIV-1).